The following is a 588-amino-acid chain: Interferon-activable protein 208 (588 aa).

A Pyrin domain is found at 5-92 (MVNYYKQIVL…VDILRKEMEK (88 aa)). Disordered stretches follow at residues 157–183 (ATST…SLQT) and 469–526 (EMQN…RRVN). Composition is skewed to polar residues over residues 172–183 (RFPTTASSSLQT) and 470–487 (MQNP…QPRL).

It belongs to the HIN-200 family.

The protein is Interferon-activable protein 208 of Mus musculus (Mouse).